A 537-amino-acid polypeptide reads, in one-letter code: Oocyte zinc finger protein XlCOF29 (537 aa).

The disordered stretch occupies residues 1–21; that stretch reads MGMSEKASDTGMKGKKKDKNE. 6 consecutive C2H2-type zinc fingers follow at residues 375–397, 403–425, 431–453, 459–481, 487–509, and 515–537; these read FTCSECGKTYTRLYNLKIHLKSH, FSCSECEECFTDHTDLVIHRRLH, FPCAECGKCFTNCTNLRAHSKTH, YSCTECGKTFRDRSHLNIHKKRH, YTCSECGKCFAYRSNLMVHVRIH, and FSCSKCGKCFTDHANLIVHERMH.

It belongs to the krueppel C2H2-type zinc-finger protein family.

The protein localises to the nucleus. In terms of biological role, may be involved in transcriptional regulation. The sequence is that of Oocyte zinc finger protein XlCOF29 from Xenopus laevis (African clawed frog).